The sequence spans 275 residues: Large ribosomal subunit protein uL2 (275 aa).

Residues 28 to 38 (RPYDGLLEKKS) show a composition bias toward basic and acidic residues. Disordered regions lie at residues 28-58 (RPYDGLLEKKSKSGGRNNNGRITTRHVGGGH) and 223-275 (VAMN…RKAK). Over residues 254 to 275 (KGHKTRKNKRTDKLIVRRRKAK) the composition is skewed to basic residues.

It belongs to the universal ribosomal protein uL2 family. As to quaternary structure, part of the 50S ribosomal subunit. Forms a bridge to the 30S subunit in the 70S ribosome.

One of the primary rRNA binding proteins. Required for association of the 30S and 50S subunits to form the 70S ribosome, for tRNA binding and peptide bond formation. It has been suggested to have peptidyltransferase activity; this is somewhat controversial. Makes several contacts with the 16S rRNA in the 70S ribosome. The chain is Large ribosomal subunit protein uL2 from Chromohalobacter salexigens (strain ATCC BAA-138 / DSM 3043 / CIP 106854 / NCIMB 13768 / 1H11).